Reading from the N-terminus, the 68-residue chain is Large ribosomal subunit protein bL35 (68 aa).

Composition is skewed to basic residues over residues Met-1–Lys-11 and Ser-19–Ala-29. A disordered region spans residues Met-1–Met-54.

The protein belongs to the bacterial ribosomal protein bL35 family.

This chain is Large ribosomal subunit protein bL35, found in Myxococcus xanthus (strain DK1622).